Reading from the N-terminus, the 281-residue chain is ATP synthase gamma chain (281 aa).

The protein belongs to the ATPase gamma chain family. As to quaternary structure, F-type ATPases have 2 components, CF(1) - the catalytic core - and CF(0) - the membrane proton channel. CF(1) has five subunits: alpha(3), beta(3), gamma(1), delta(1), epsilon(1). CF(0) has three main subunits: a, b and c.

The protein resides in the cell membrane. Produces ATP from ADP in the presence of a proton gradient across the membrane. The gamma chain is believed to be important in regulating ATPase activity and the flow of protons through the CF(0) complex. This chain is ATP synthase gamma chain, found in Clostridium pasteurianum.